Reading from the N-terminus, the 326-residue chain is Target of rapamycin complex subunit lst8 (326 aa).

7 WD repeats span residues 1–37, 40–80, 83–122, 126–165, 168–207, 218–257, and 268–309; these read MNSN…CTRT, HQDS…PVIN, GVSK…LQCQ, QVNA…NEQL, ETDV…GEDL, AHKR…LMTE, and TSRG…REYS.

This sequence belongs to the WD repeat LST8 family. Part of the mechanistic target of rapamycin complex 1 (mTORC1) which contains MTOR, MLST8 and RPTOR. Component of the mechanistic target of rapamycin complex 2 (mTORC2), consisting in two heterotretramers composed of MTOR, MLST8, RICTOR and MAPKAP1/SIN1.

It is found in the lysosome membrane. The protein resides in the cytoplasm. In terms of biological role, subunit of both mTORC1 and mTORC2, which regulates cell growth and survival in response to nutrient and hormonal signals. mTORC1 is activated in response to growth factors or amino acids. In response to nutrients, mTORC1 is recruited to the lysosome membrane and promotes protein, lipid and nucleotide synthesis by phosphorylating several substrates, such as ribosomal protein S6 kinase (RPS6KB1 and RPS6KB2) and EIF4EBP1 (4E-BP1). In the same time, it inhibits catabolic pathways by phosphorylating the autophagy initiation components ULK1 and ATG13, as well as transcription factor TFEB, a master regulators of lysosomal biogenesis and autophagy. The mTORC1 complex is inhibited in response to starvation and amino acid depletion. Within mTORC1, MLST8 interacts directly with MTOR and enhances its kinase activity. In nutrient-poor conditions, stabilizes the MTOR-RPTOR interaction and favors RPTOR-mediated inhibition of MTOR activity. As part of the mTORC2 complex, transduces signals from growth factors to pathways involved in proliferation, cytoskeletal organization, lipogenesis and anabolic output. mTORC2 is also activated by growth factors, but seems to be nutrient-insensitive. In response to growth factors, mTORC2 phosphorylates and activates AGC protein kinase family members, including AKT (AKT1, AKT2 and AKT3), PKC (PRKCA, PRKCB and PRKCE) and SGK1. mTORC2 functions upstream of Rho GTPases to regulate the actin cytoskeleton, probably by activating one or more Rho-type guanine nucleotide exchange factors. mTORC2 promotes the serum-induced formation of stress-fibers or F-actin. Within mTORC2, MLST8 acts as a bridge between MAPKAP1/SIN1 and MTOR. The sequence is that of Target of rapamycin complex subunit lst8 (mlst8) from Xenopus tropicalis (Western clawed frog).